The sequence spans 280 residues: ESX-1 secretion-associated protein EspJ (280 aa).

Residue S70 is modified to Phosphoserine. Low complexity-rich tracts occupy residues Q167 to Q181 and P246 to L280. The interval Q167–L280 is disordered.

Phosphorylated at Ser-70.

It is found in the secreted. Functionally, could be involved in regulation of growth and intracellular survival. The polypeptide is ESX-1 secretion-associated protein EspJ (Mycobacterium tuberculosis (strain CDC 1551 / Oshkosh)).